The chain runs to 351 residues: LIM/homeobox protein ceh-14 (351 aa).

LIM zinc-binding domains are found at residues 46–105 (AICS…KFGT) and 105–169 (TKCS…ARDK). Residues 180 to 239 (NKRPRTTISAKSLETLKQAYQTSSKPARHVREQLASETGLDMRVVQVWFQNRRAKEKRLK) constitute a DNA-binding region (homeobox). Basic and acidic residues predominate over residues 238-254 (LKKDAGRRWKSSNRAES). Residues 238–268 (LKKDAGRRWKSSNRAESDSNSPIESINGQSP) form a disordered region. Polar residues predominate over residues 255-268 (DSNSPIESINGQSP).

In terms of assembly, interacts (via LIM zinc-binding domains 1 and 2) with lim-7 (via LID domain). May interact with itself. May interact with homeobox protein ceh-63. In terms of tissue distribution, expressed in the anterior AFDL/R sensory neurons and BDUL/R and ALA interneurons, and in PVT, PVQL/R, DVC, PVNL/R, PVWL/R, PVR, PHCL/R, PHAL/R and PHBL/R cells in the tail region.

It localises to the nucleus. Functionally, probable transcription factor, modulating expression of helix-loop-helix protein mbr-1 and homeobox protein ceh-63, perhaps acting in concert with ceh-63. Binds to a motif including the sequence 5'-CTAAT-3' in regulatory promoter elements. Confers thermosensory function to neurons. Required for correct AFD-mediated thermotaxis. In concert with homeobox protein ttx-1, perhaps as components in a complex, specifies identity of AFD neurons, acting by synergistically regulating receptor-type guanylyl cyclase gcy-8, gcy-18 and other genes. Involved in postembryonic differentiation of the ALA neuron, and regulation of genes that contribute to behavioral quiescence, a sleep-like behavior mediated by ALA. Regulates its own expression and also that of homeodomain ceh-17, together forming an autoregulatory loop in the ALA neuron. Required for initial pathfinding of the ALA axons, but largely dispensable for axon migration. Involved in regulating postembryonic axon maintenance in the ventral nerve cord, acting in concert with LIM homeobox protein lim-6, via modulation of expression of immunoglobulin domain zig genes in the interneuron PVT. Plays a role in controlling the peptidergic identity of the BDU neurons, regulating expression of flp-10, nlp-1, and nlp-15, thereby modulating the harsh touch response. This is LIM/homeobox protein ceh-14 (ceh-14) from Caenorhabditis elegans.